Consider the following 266-residue polypeptide: Tryptophan synthase alpha chain (266 aa).

Residues E50 and D61 each act as proton acceptor in the active site.

It belongs to the TrpA family. As to quaternary structure, tetramer of two alpha and two beta chains.

The enzyme catalyses (1S,2R)-1-C-(indol-3-yl)glycerol 3-phosphate + L-serine = D-glyceraldehyde 3-phosphate + L-tryptophan + H2O. It participates in amino-acid biosynthesis; L-tryptophan biosynthesis; L-tryptophan from chorismate: step 5/5. Functionally, the alpha subunit is responsible for the aldol cleavage of indoleglycerol phosphate to indole and glyceraldehyde 3-phosphate. The protein is Tryptophan synthase alpha chain of Alkaliphilus metalliredigens (strain QYMF).